Consider the following 310-residue polypeptide: Phosphoribosylaminoimidazole-succinocarboxamide synthase (310 aa).

It belongs to the SAICAR synthetase family.

The enzyme catalyses 5-amino-1-(5-phospho-D-ribosyl)imidazole-4-carboxylate + L-aspartate + ATP = (2S)-2-[5-amino-1-(5-phospho-beta-D-ribosyl)imidazole-4-carboxamido]succinate + ADP + phosphate + 2 H(+). Its pathway is purine metabolism; IMP biosynthesis via de novo pathway; 5-amino-1-(5-phospho-D-ribosyl)imidazole-4-carboxamide from 5-amino-1-(5-phospho-D-ribosyl)imidazole-4-carboxylate: step 1/2. The chain is Phosphoribosylaminoimidazole-succinocarboxamide synthase from Xanthomonas campestris pv. campestris (strain B100).